A 432-amino-acid polypeptide reads, in one-letter code: Cyclic GMP-AMP synthase (432 aa).

Glutamine 110–tyrosine 115 provides a ligand contact to GTP. The Mg(2+) site is built by aspartate 129 and aspartate 131. Arginine 180 contributes to the ATP binding site. Aspartate 191 is a binding site for Mg(2+). Serine 255 is a binding site for ATP. GTP contacts are provided by lysine 283, serine 297, and aspartate 344. Glycine 432 is covalently cross-linked (Glycyl cysteine dithioester (Gly-Cys) (interchain with C-13 in Cap2)). Glycine 432 is covalently cross-linked (Glycyl cysteine dithioester (Gly-Cys) (interchain with C-493 in Cap2)). Glycine 432 participates in a covalent cross-link: Glycyl cysteine dithioester (Gly-Cys) (interchain with C-513 in Cap2). A Glycyl lysine isopeptide (Gly-Lys) (interchain with K-? in acceptor proteins) cross-link involves residue glycine 432.

Belongs to the CD-NTase family. A02 subfamily. As to quaternary structure, a Cap2 dimer is bound on either side by a DncV monomer. Requires Mg(2+) as cofactor. Post-translationally, in bacteria expressing capV-dncV-cap2-cap3, this protein is conjugated to about 130 cellular proteins by Cap2, most of which are involved in metabolism; more conjugated protein is found in the absence of Cap3. Most conjugation occurs via an isopeptide bond with the epsilon-amine of Lys on the target protein, but Cys-conjugation also occurs, including to Cap2. Conjugation or deconjugation from cellular proteins does not change the DncV activity in vitro, but does so in vivo during infection. In terms of processing, (Microbial infection) During phage T4 infection is conjugated to at least 2 T4 proteins (fibritin (wac) and dexA.2).

The enzyme catalyses GTP + ATP = 3',3'-cGAMP + 2 diphosphate. With respect to regulation, primed for activation by Cap2 which conjugates it to cellular proteins. cGAMP production is induced in phage T4 infected cells in a manner that requires Cap2 and Cap3, as well as a C-terminal Ala or Gly residue in this protein. Functionally, cyclic nucleotide synthase (second messenger synthase) of a CBASS antivirus system. CBASS (cyclic oligonucleotide-based antiphage signaling system) provides immunity against bacteriophages. The CD-NTase protein (DncV, this protein) synthesizes cyclic nucleotides in response to infection; these serve as specific second messenger signals. The signals activate a diverse range of effectors, leading to bacterial cell death and thus abortive phage infection. A type II-A(GA) CBASS system. In terms of biological role, catalyzes the synthesis of 3',3'-cyclic GMP-AMP (cGAMP) from GTP and ATP, a second messenger in cell signal transduction. Its product controls the activity of cGAMP-activated phospholipase CapV, a patatin-like lipase that is a direct cGAMP receptor encoded in the dncV operon. Protects E.coli against phage infection. When capV and dncV are introduced in E.coli MG1655 there is 1000-fold protection against phage P1; protection against other phage (T2, T4, T5, T6 and lambda-vir) requires the 2 subsequent genes (cap2 and cap3). In another paper the capV-dncV-cap2-cap3 operon gives 10(4)-10(5)-fold protection against phages lambda, T2, T4 and T6, about 1000-fold protection against P1 and 10-fold protection against T5. The polypeptide is Cyclic GMP-AMP synthase (Escherichia coli (strain TW11681)).